The chain runs to 461 residues: Bifunctional protein HldE (461 aa).

Residues 1–311 (MKKILVVGDL…EEIALILNQT (311 aa)) are ribokinase. Position 191–194 (191–194 (NRAE)) interacts with ATP. The active site involves D260. The interval 332–461 (FTNGCFDLLH…IEKIKRTHND (130 aa)) is cytidylyltransferase.

The protein in the N-terminal section; belongs to the carbohydrate kinase PfkB family. It in the C-terminal section; belongs to the cytidylyltransferase family. Homodimer.

The enzyme catalyses D-glycero-beta-D-manno-heptose 7-phosphate + ATP = D-glycero-beta-D-manno-heptose 1,7-bisphosphate + ADP + H(+). It catalyses the reaction D-glycero-beta-D-manno-heptose 1-phosphate + ATP + H(+) = ADP-D-glycero-beta-D-manno-heptose + diphosphate. It participates in nucleotide-sugar biosynthesis; ADP-L-glycero-beta-D-manno-heptose biosynthesis; ADP-L-glycero-beta-D-manno-heptose from D-glycero-beta-D-manno-heptose 7-phosphate: step 1/4. The protein operates within nucleotide-sugar biosynthesis; ADP-L-glycero-beta-D-manno-heptose biosynthesis; ADP-L-glycero-beta-D-manno-heptose from D-glycero-beta-D-manno-heptose 7-phosphate: step 3/4. In terms of biological role, catalyzes the phosphorylation of D-glycero-D-manno-heptose 7-phosphate at the C-1 position to selectively form D-glycero-beta-D-manno-heptose-1,7-bisphosphate. Functionally, catalyzes the ADP transfer from ATP to D-glycero-beta-D-manno-heptose 1-phosphate, yielding ADP-D-glycero-beta-D-manno-heptose. This chain is Bifunctional protein HldE, found in Helicobacter pylori (strain P12).